The sequence spans 316 residues: 4-diphosphocytidyl-2-C-methyl-D-erythritol kinase (316 aa).

Lys-23 is an active-site residue. 108–118 (PVAGGMAGGSA) serves as a coordination point for ATP. Residue Asp-150 is part of the active site.

This sequence belongs to the GHMP kinase family. IspE subfamily.

It carries out the reaction 4-CDP-2-C-methyl-D-erythritol + ATP = 4-CDP-2-C-methyl-D-erythritol 2-phosphate + ADP + H(+). The protein operates within isoprenoid biosynthesis; isopentenyl diphosphate biosynthesis via DXP pathway; isopentenyl diphosphate from 1-deoxy-D-xylulose 5-phosphate: step 3/6. Catalyzes the phosphorylation of the position 2 hydroxy group of 4-diphosphocytidyl-2C-methyl-D-erythritol. This chain is 4-diphosphocytidyl-2-C-methyl-D-erythritol kinase, found in Mycobacterium avium (strain 104).